The chain runs to 281 residues: GDT1-like protein 4 (281 aa).

The N-terminal stretch at 1 to 22 is a signal peptide; the sequence is MARRVSTTRLLLLLLLVAAAAA. 6 helical membrane-spanning segments follow: residues 66–86, 105–125, 137–157, 188–208, 226–246, and 258–278; these read AGLG…VSEI, TVLS…TGLG, TNSA…YIAW, IFSR…FLAE, AVGV…FAVV, and GTVA…SYFY.

This sequence belongs to the GDT1 family.

The protein localises to the membrane. The chain is GDT1-like protein 4 from Oryza sativa subsp. indica (Rice).